The primary structure comprises 692 residues: MAREIALDHVRNIGIMAHIDAGKTTVTERILYYTGRSHKIGEVHEGAATMDWMEQEQERGITITSAATTCFWKEHRINIIDTPGHVDFTIEVERSLRVLDGAVAVFCGVAGVQPQSETVWRQADRYGVPRLAFVNKMDRMGADFNKAVQTMKDRLKARAIPAQYPIGAEEDLRGMVDLITRKAYIFNDESLGAEFEVLDCPEDIEAEVEEAREALLEAALEQDDTLMEKYLEGEEITIAEFKSCMRRAVISSAFVPVFCGSAFKNKGVQLLLDAVVDYFPSPSDTPYIEGLLPDSEEAAVRKPSDEEPFAALAFKIMTDPFVGTLTFVRVYSGVMESGTSVLNASKDRKERIGRLMLMHANKREDIKEVRAGDICAVVGLKNTTTGETLCDPNKPIILEKMDFPAPVIAIAVEPKTKADQERMGVALQRLAQEDPSFRVEVDHETNQTIISGMGELHLEIIVDRMMREFKVDANVGQPQVAYRETITQMVEHESKFVRQSGGRGQFGHVWLRLEPNEPGAGYEFVDGIKGGVVPKEYIPAVKNGVGEAMANGVYVGFPMVDVKVTLFDGSYHEVDSSEMAFKIAGSMGLKEGAMKAKPVLLEPIMDVEVETPEDYMGDVMGDMNSRRGQIQGMEDSGNNRLVKAQVPLSGMFGYATDLRSMSQGRATFTMQFGHYAQVPKSIAEEIKAKTTG.

A tr-type G domain is found at 8–283; the sequence is DHVRNIGIMA…AVVDYFPSPS (276 aa). GTP contacts are provided by residues 17-24, 81-85, and 135-138; these read AHIDAGKT, DTPGH, and NKMD.

This sequence belongs to the TRAFAC class translation factor GTPase superfamily. Classic translation factor GTPase family. EF-G/EF-2 subfamily.

The protein localises to the cytoplasm. In terms of biological role, catalyzes the GTP-dependent ribosomal translocation step during translation elongation. During this step, the ribosome changes from the pre-translocational (PRE) to the post-translocational (POST) state as the newly formed A-site-bound peptidyl-tRNA and P-site-bound deacylated tRNA move to the P and E sites, respectively. Catalyzes the coordinated movement of the two tRNA molecules, the mRNA and conformational changes in the ribosome. This chain is Elongation factor G, found in Magnetococcus marinus (strain ATCC BAA-1437 / JCM 17883 / MC-1).